Here is a 378-residue protein sequence, read N- to C-terminus: Fetuin-B (378 aa).

A signal peptide spans 1–18; sequence MGVLRLLVLCTLAACCVA. Cystatin fetuin-B-type domains are found at residues 28-141 and 152-261; these read NAPF…YNCT and SMCP…VSCE. N-linked (GlcNAc...) asparagine glycosylation occurs at Asn-40. 5 disulfide bridges follow: Cys-96–Cys-107, Cys-120–Cys-140, Cys-154–Cys-157, Cys-217–Cys-224, and Cys-237–Cys-260. Asn-139 carries N-linked (GlcNAc...) asparagine glycosylation. Disordered stretches follow at residues 266-338 and 357-378; these read QDQV…PQGD and LPFP…QRTP. Positions 286 to 297 are enriched in polar residues; that stretch reads QKNTAPTSSPSI. Residues Thr-289 and Thr-292 are each glycosylated (O-linked (GalNAc...) threonine). Ser-316 is subject to Phosphoserine. Positions 362-378 are enriched in basic and acidic residues; the sequence is KEQRSPECPGPEKQRTP.

The protein belongs to the fetuin family. As to expression, liver.

Its subcellular location is the secreted. In terms of biological role, protease inhibitor required for egg fertilization. Required to prevent premature zona pellucida hardening before fertilization, probably by inhibiting the protease activity of ASTL, a protease that mediates the cleavage of ZP2 and triggers zona pellucida hardening. This is Fetuin-B (Fetub) from Rattus norvegicus (Rat).